Here is a 263-residue protein sequence, read N- to C-terminus: uncharacterized protein (263 aa).

The protein belongs to the AtsA family.

It is found in the plastid. Its subcellular location is the chloroplast. This is an uncharacterized protein from Pyropia yezoensis (Susabi-nori).